Consider the following 438-residue polypeptide: DEAD-box ATP-dependent RNA helicase 58, chloroplastic (438 aa).

Residues 1 to 44 constitute a chloroplast transit peptide; that stretch reads MAAFSGCASPLSTTLRSGLAPFTLRHRLRLRRLRASAATLREVC. Positions 41–69 match the Q motif motif; sequence REVCAGRVPEHVLQRAEEVGYVVPTEVQE. Residues 72-245 enclose the Helicase ATP-binding domain; sequence LPVLLSGQDC…DCVQHKWTKT (174 aa). An ATP-binding site is contributed by 85 to 92; it reads AQTGSGKT. The short motif at 190-193 is the DEAD box element; sequence DEVD. The Helicase C-terminal domain occupies 274 to 436; sequence RLHVLLSLLE…ELPVESMFAF (163 aa).

This sequence belongs to the DEAD box helicase family.

It is found in the plastid. The protein resides in the chloroplast. The enzyme catalyses ATP + H2O = ADP + phosphate + H(+). This is DEAD-box ATP-dependent RNA helicase 58, chloroplastic from Oryza sativa subsp. japonica (Rice).